A 161-amino-acid chain; its full sequence is Large ribosomal subunit protein uL11 (161 aa).

This sequence belongs to the universal ribosomal protein uL11 family. In terms of assembly, part of the ribosomal stalk of the 50S ribosomal subunit. Interacts with L10 and the large rRNA to form the base of the stalk. L10 forms an elongated spine to which L12 dimers bind in a sequential fashion forming a multimeric L10(L12)X complex.

Functionally, forms part of the ribosomal stalk which helps the ribosome interact with GTP-bound translation factors. This Methanosarcina mazei (strain ATCC BAA-159 / DSM 3647 / Goe1 / Go1 / JCM 11833 / OCM 88) (Methanosarcina frisia) protein is Large ribosomal subunit protein uL11.